Reading from the N-terminus, the 306-residue chain is Homoserine kinase (306 aa).

An ATP-binding site is contributed by 91 to 101 (PLARGLGSSAT).

This sequence belongs to the GHMP kinase family. Homoserine kinase subfamily.

It is found in the cytoplasm. The enzyme catalyses L-homoserine + ATP = O-phospho-L-homoserine + ADP + H(+). It functions in the pathway amino-acid biosynthesis; L-threonine biosynthesis; L-threonine from L-aspartate: step 4/5. In terms of biological role, catalyzes the ATP-dependent phosphorylation of L-homoserine to L-homoserine phosphate. This Synechocystis sp. (strain ATCC 27184 / PCC 6803 / Kazusa) protein is Homoserine kinase.